Consider the following 715-residue polypeptide: MSMFNKVVKEFQWGQHKVRLETGEVARQASGAVIVDVEDTVVLATVVGAKSAKPGQDFFPLTVDYLEKTYSAGKIPGGFFRREGRPSEHETLTSRLIDRPLRPLFPEGFYNEVQVVIHVLSVNPEIPADIPALIGASAALAVSGLPFNGPVGAARVAYIDNAYVLNPTRDQLKASSLDLVVAGTERAVLMVESEADQLSEEVMLGAVVFGHEQMQIAIDAIHELVRDGGKPEWDWQPAAKNEALIARVTELAQNDLLAAYQLRDKQARSAKLKEVYAATSAKLEEDALAAGTVAADKATVGNVLFDIEAKIVRSQILNGEPRIDGRDTRTVRPIEIRTGVLPRTHGSALFTRGETQALVVATLGTKGDEQIIDALEGEYRERFMLHYNMPPFATGETGRVGSPKRREIGHGRLAKRALVKCLPSADEFGYSIRVVSEITESNGSSSMASVCGGCLALMDAGVPMKAHVAGIAMGLILEGNKFAVLTDILGDEDHLGDMDFKVAGTEQGVTALQMDIKIQGITKEIMQVALAQAKEGRLHILGKMTSAVSGANTQLSEFAPRMITVKINPEKIRDVIGKGGSVIRALTEETGTTIDISDDGVVTIASTSSEGMAEAKKRIEQITAEIEVGQVYEGTVLKLLDFGAIVNLLPGKDGLLHISEIVNERVKDINDYLKEGQQVKVKVIQTDEKGRVRLSAKALLNEAAAAAQSDTPPQQ.

Aspartate 493 and aspartate 499 together coordinate Mg(2+). Residues 560–619 (PRMITVKINPEKIRDVIGKGGSVIRALTEETGTTIDISDDGVVTIASTSSEGMAEAKKRI) form the KH domain. The S1 motif domain occupies 629–697 (GQVYEGTVLK…EKGRVRLSAK (69 aa)).

It belongs to the polyribonucleotide nucleotidyltransferase family. Mg(2+) serves as cofactor.

Its subcellular location is the cytoplasm. The enzyme catalyses RNA(n+1) + phosphate = RNA(n) + a ribonucleoside 5'-diphosphate. Its function is as follows. Involved in mRNA degradation. Catalyzes the phosphorolysis of single-stranded polyribonucleotides processively in the 3'- to 5'-direction. The polypeptide is Polyribonucleotide nucleotidyltransferase (Burkholderia orbicola (strain MC0-3)).